A 251-amino-acid chain; its full sequence is Triosephosphate isomerase (251 aa).

Residue 9–11 (NWK) participates in substrate binding. Catalysis depends on H96, which acts as the Electrophile. The active-site Proton acceptor is the E168. Substrate contacts are provided by residues G174, S214, and 235–236 (GG).

It belongs to the triosephosphate isomerase family. In terms of assembly, homodimer.

The protein localises to the cytoplasm. It carries out the reaction D-glyceraldehyde 3-phosphate = dihydroxyacetone phosphate. The protein operates within carbohydrate biosynthesis; gluconeogenesis. It functions in the pathway carbohydrate degradation; glycolysis; D-glyceraldehyde 3-phosphate from glycerone phosphate: step 1/1. Functionally, involved in the gluconeogenesis. Catalyzes stereospecifically the conversion of dihydroxyacetone phosphate (DHAP) to D-glyceraldehyde-3-phosphate (G3P). This Cytophaga hutchinsonii (strain ATCC 33406 / DSM 1761 / CIP 103989 / NBRC 15051 / NCIMB 9469 / D465) protein is Triosephosphate isomerase.